Here is a 181-residue protein sequence, read N- to C-terminus: MTPELAHDLKASVRSIPDYPKPGIVFRDITTLLGDPRAFRRAVDELVQPWAGSKVDKVAGIEARGFIIGGAVAHQVSSGFVPIRKKGKLPHTCVSMEYALEYGTDHIEIHVDAVKPGERVILVDDLIATGGTAEGAIKLLRQLGAEVVAACFIVDLPDLGGAAKIRAMGVPVRTLIEFGGH.

This sequence belongs to the purine/pyrimidine phosphoribosyltransferase family. Homodimer.

It is found in the cytoplasm. It catalyses the reaction AMP + diphosphate = 5-phospho-alpha-D-ribose 1-diphosphate + adenine. Its pathway is purine metabolism; AMP biosynthesis via salvage pathway; AMP from adenine: step 1/1. In terms of biological role, catalyzes a salvage reaction resulting in the formation of AMP, that is energically less costly than de novo synthesis. The polypeptide is Adenine phosphoribosyltransferase (Rhodopseudomonas palustris (strain BisB5)).